Reading from the N-terminus, the 158-residue chain is Probable inactive acireductone dioxygenase 2 (158 aa).

It belongs to the acireductone dioxygenase (ARD) family.

It localises to the cytoplasm. Its subcellular location is the nucleus. Its function is as follows. Probable inactive acireductone dioxygenase. This chain is Probable inactive acireductone dioxygenase 2, found in Caenorhabditis elegans.